Reading from the N-terminus, the 430-residue chain is RNA-binding protein 34 (430 aa).

3 disordered regions span residues M1–R55, V72–E123, and E134–A153. A phosphoserine mark is found at S14, S28, and S99. Basic and acidic residues predominate over residues D23–R34. Residues T113 to E123 show a composition bias toward basic and acidic residues. Position 151 is an N6-acetyllysine (K151). RRM domains lie at R185–E280 and R287–N364. Residue K242 forms a Glycyl lysine isopeptide (Lys-Gly) (interchain with G-Cter in SUMO2) linkage. S288 bears the Phosphoserine mark. 2 disordered regions span residues K365–E395 and K411–K430.

Belongs to the RRM RBM34 family.

The protein localises to the nucleus. It is found in the nucleolus. This chain is RNA-binding protein 34 (RBM34), found in Homo sapiens (Human).